Consider the following 429-residue polypeptide: Probable M18 family aminopeptidase 2 (429 aa).

Positions 82, 156, and 401 each coordinate Zn(2+).

This sequence belongs to the peptidase M18 family. It depends on Zn(2+) as a cofactor.

The polypeptide is Probable M18 family aminopeptidase 2 (Pseudomonas savastanoi pv. phaseolicola (strain 1448A / Race 6) (Pseudomonas syringae pv. phaseolicola (strain 1448A / Race 6))).